Reading from the N-terminus, the 262-residue chain is Probable carboxylesterase Culp3 (262 aa).

The signal sequence occupies residues 1-41; it reads MNNRPIRLLTSGRAGLGAGALITAVVLLIALGAVWTLVAFA. A disulfide bond links Cys-44 and Cys-114. The Nucleophile role is filled by Ser-125. Cys-188 and Cys-195 form a disulfide bridge. Asp-192 is a catalytic residue. The active-site Proton donor/acceptor is His-206. The segment at 241–262 is disordered; it reads LPGSVLQMPGTAAPAPESLHGR.

It belongs to the cutinase family.

It is found in the secreted. In Mycobacterium tuberculosis (strain CDC 1551 / Oshkosh), this protein is Probable carboxylesterase Culp3 (cut3).